A 317-amino-acid polypeptide reads, in one-letter code: N-acetylmuramoyl-L-alanine amidase XlyB (317 aa).

The N-terminal stretch at 1 to 39 (MSIPVKKNLVSEAKYALKCPNAMSAEYITIHNTANDASA) is a signal peptide. The 103-residue stretch at 40 to 142 (ANEISYMIGN…QDWSGKYCPH (103 aa)) folds into the N-acetylmuramoyl-L-alanine amidase domain. Residues 177 to 221 (SEYHVKKGDTLSGIAASHGASVKTLQSINHITDPNHIKIGQVIKL) form the LysM domain.

It belongs to the N-acetylmuramoyl-L-alanine amidase 2 family.

The protein resides in the secreted. The enzyme catalyses Hydrolyzes the link between N-acetylmuramoyl residues and L-amino acid residues in certain cell-wall glycopeptides.. Autolysins are involved in some important biological processes such as cell separation, cell-wall turnover, competence for genetic transformation, formation of the flagella and sporulation. The chain is N-acetylmuramoyl-L-alanine amidase XlyB (xlyB) from Bacillus subtilis (strain 168).